The primary structure comprises 71 residues: Small ribosomal subunit protein bS21 (71 aa).

The interval 39–71 (EKPTQERKRKAAAAVKRQMRRTSRDVTKRKRLY) is disordered. Positions 45–71 (RKRKAAAAVKRQMRRTSRDVTKRKRLY) are enriched in basic residues.

Belongs to the bacterial ribosomal protein bS21 family.

The chain is Small ribosomal subunit protein bS21 from Xylella fastidiosa (strain M12).